A 400-amino-acid chain; its full sequence is MSDLQRTWAKAKFGASNDPFDEPQEEQGQDVLPELPEPVDDDSSSASSASSVSSTGTIIPSPNQKLFARPQGVARGRTLEQIPWTTYFEREVSLKSEQDPEVIYHAYLTSPVGKGPLFVMHHGAGSSGLSFAVVASQIRKRISTAGILALDCRGHGSTYAPEDKAFDMRLDTLSSDLYNVVQLTKTEMSWPEMPPIVLVGHSLGGAVVTDLAKSGKLGTSVLGYAVLDVVEGSAIDALQSMHTYLSTRPLGFATLQAGIEWHIRSRTIRNSISARTSVPALLVFNENDDPTRPWRWRTNLGATQPYWEDWFVGLSKKFLEARGGKMLLLAGTDRLDTELTIGQMQGKYALQVFPEAGHFIHEDLPEKTAVSLVDFFRRNDRTALVLPPKVSDLIKQGKRV.

The interval 1–72 is disordered; sequence MSDLQRTWAK…NQKLFARPQG (72 aa). Residues 19–28 show a composition bias toward acidic residues; sequence PFDEPQEEQG. Residues 44–54 show a composition bias toward low complexity; sequence SSASSASSVSS. Residues 55-64 are compositionally biased toward polar residues; it reads TGTIIPSPNQ. Active-site residues include Ser202, Asp228, and His358.

This sequence belongs to the AB hydrolase superfamily.

It catalyses the reaction [phosphatase 2A protein]-C-terminal L-leucine methyl ester + H2O = [phosphatase 2A protein]-C-terminal L-leucine + methanol + H(+). Functionally, demethylates proteins that have been reversibly carboxymethylated. Demethylates the phosphatase PP2A catalytic subunit. This Gibberella zeae (strain ATCC MYA-4620 / CBS 123657 / FGSC 9075 / NRRL 31084 / PH-1) (Wheat head blight fungus) protein is Protein phosphatase methylesterase 1 (PPE1).